We begin with the raw amino-acid sequence, 105 residues long: Large ribosomal subunit protein uL18c (105 aa).

Belongs to the universal ribosomal protein uL18 family. Part of the 50S ribosomal subunit; contacts the 5S rRNA.

Its subcellular location is the plastid. The protein resides in the chloroplast. In terms of biological role, binds 5S rRNA, forms part of the central protuberance of the 50S subunit. The sequence is that of Large ribosomal subunit protein uL18c (rpl18) from Cyanidium caldarium (Red alga).